Here is a 329-residue protein sequence, read N- to C-terminus: GDP-mannose transporter (329 aa).

Topologically, residues 1-13 (MSELKVDTGRLSH) are cytoplasmic. A helical membrane pass occupies residues 14-34 (IANSGPMSILAYCASSILMTV). At 35–44 (TNKCVVGSDK) the chain is on the lumenal side. Residues 45–65 (FNMLFVMLFAQSLVCVTALVL) traverse the membrane as a helical segment. The Cytoplasmic segment spans residues 66-79 (LKALGYVQYRPLNK). A helical transmembrane segment spans residues 80-100 (VDVKNWLLISVLLVLMTYTSS). The Lumenal segment spans residues 101 to 109 (RALKYLAVP). Residues 110–130 (IYTIFKNLTIILIAYGEVLFF) form a helical membrane-spanning segment. Residues 131–133 (GGR) lie on the Cytoplasmic side of the membrane. Residues 134–154 (VTAMELSSFLLIVLSSVVATL) traverse the membrane as a helical segment. Residues 155-174 (GDQQALAKKPLAAAVESILG) lie on the Lumenal side of the membrane. The chain crosses the membrane as a helical span at residues 175–195 (LNVGYFWMFTNCICSALFVLI). Residues 196–214 (MRKRIALTKFKDFDTMFYN) lie on the Cytoplasmic side of the membrane. The helical transmembrane segment at 215-235 (NILSLPLLMLASFMFEDWGAA) threads the bilayer. Residues 236 to 245 (NIARNLTKDY) are Lumenal-facing. Asn-240 is a glycosylation site (N-linked (GlcNAc...) asparagine). The helical transmembrane segment at 246–266 (IIIMIISGLASVGISYCSGWC) threads the bilayer. At 267–273 (VRVTSST) the chain is on the cytoplasmic side. A helical membrane pass occupies residues 274-294 (TYSMVGALNKLPIALSGLLFF). Residues 295-298 (DAPK) lie on the Lumenal side of the membrane. The chain crosses the membrane as a helical span at residues 299–319 (NFLSIFSIFLGFLSGIVYAVA). Residues 320–329 (KQKKQSQPAN) are Cytoplasmic-facing.

This sequence belongs to the TPT transporter family. SLC35D subfamily. In terms of assembly, homooligomer.

It localises to the golgi apparatus membrane. The protein resides in the cytoplasmic vesicle membrane. The protein localises to the endoplasmic reticulum membrane. In terms of biological role, involved in the import of GDP-mannose from the cytoplasm into the Golgi lumen. This Eremothecium gossypii (strain ATCC 10895 / CBS 109.51 / FGSC 9923 / NRRL Y-1056) (Yeast) protein is GDP-mannose transporter (VRG4).